Consider the following 128-residue polypeptide: Diacylglycerol kinase (128 aa).

An a divalent metal cation-binding site is contributed by Glu-34. Helical transmembrane passes span 35–55 and 58–78; these read SAFR…SYLA and FLEW…ELIN. Residue Glu-75 is the Proton acceptor of the active site. Residue Glu-82 participates in a divalent metal cation binding. The helical transmembrane segment at 107-127 threads the bilayer; that stretch reads QLIGLIFWTLIWGRYLLALYL.

It belongs to the bacterial diacylglycerol kinase family. It depends on Mg(2+) as a cofactor.

It is found in the cell inner membrane. It catalyses the reaction a 1,2-diacyl-sn-glycerol + ATP = a 1,2-diacyl-sn-glycero-3-phosphate + ADP + H(+). In terms of biological role, catalyzes the ATP-dependent phosphorylation of sn-l,2-diacylglycerol (DAG) to phosphatidic acid. Involved in the recycling of diacylglycerol produced as a by-product during membrane-derived oligosaccharide (MDO) biosynthesis. This Helicobacter pylori (strain ATCC 700392 / 26695) (Campylobacter pylori) protein is Diacylglycerol kinase (dgkA).